The primary structure comprises 306 residues: Homoserine kinase (306 aa).

Residue 84–94 (PAGLGLGSSGA) coordinates ATP.

This sequence belongs to the GHMP kinase family. Homoserine kinase subfamily.

It localises to the cytoplasm. It catalyses the reaction L-homoserine + ATP = O-phospho-L-homoserine + ADP + H(+). Its pathway is amino-acid biosynthesis; L-threonine biosynthesis; L-threonine from L-aspartate: step 4/5. Catalyzes the ATP-dependent phosphorylation of L-homoserine to L-homoserine phosphate. This chain is Homoserine kinase, found in Sulfurisphaera tokodaii (strain DSM 16993 / JCM 10545 / NBRC 100140 / 7) (Sulfolobus tokodaii).